Reading from the N-terminus, the 690-residue chain is Proprotein convertase subtilisin/kexin type 9 (690 aa).

A signal peptide spans 1 to 28; it reads MGTVRSRRLWWPLPLLLLLLRGPAGARA. Positions 29–150 are excised as a propeptide; it reads QEDDDGDYEE…IEEDSYVFAQ (122 aa). A Sulfotyrosine modification is found at tyrosine 36. A Phosphoserine modification is found at serine 45. One can recognise an Inhibitor I9 domain in the interval 75-147; that stretch reads TYVVVLKEET…VDYIEEDSYV (73 aa). Positions 153 to 459 constitute a Peptidase S8 domain; it reads PWNLERITPA…GWQLFCRTVW (307 aa). Active-site charge relay system residues include aspartate 184 and histidine 224. 2 cysteine pairs are disulfide-bonded: cysteine 221/cysteine 253 and cysteine 321/cysteine 356. Catalysis depends on serine 384, which acts as the Charge relay system. The interval 448–690 is C-terminal domain; sequence GAGWQLFCRT…HLAQASQELQ (243 aa). 3 cysteine pairs are disulfide-bonded: cysteine 455–cysteine 525, cysteine 475–cysteine 524, and cysteine 484–cysteine 507. An N-linked (GlcNAc...) asparagine glycan is attached at asparagine 531. Cystine bridges form between cysteine 532/cysteine 599, cysteine 550/cysteine 598, cysteine 560/cysteine 586, cysteine 606/cysteine 677, cysteine 624/cysteine 676, and cysteine 633/cysteine 652. Serine 686 carries the phosphoserine modification.

Belongs to the peptidase S8 family. In terms of assembly, monomer. Can self-associate to form dimers and higher multimers which may have increased LDLR degrading activity. The precursor protein but not the mature protein may form multimers. Interacts with APOB, VLDLR, LRP8/APOER2 and BACE1. The full-length immature form (pro-PCSK9) interacts with SCNN1A, SCNN1B and SCNN1G. The pro-PCSK9 form (via C-terminal domain) interacts with LDLR. Interacts (via the C-terminal domain) with ANXA2 (via repeat Annexin 1); the interaction inhibits the degradation of LDLR. Requires Ca(2+) as cofactor. Post-translationally, cleavage by furin and PCSK5 generates a truncated inactive protein that is unable to induce LDLR degradation. Undergoes autocatalytic cleavage in the endoplasmic reticulum to release the propeptide from the N-terminus and the cleavage of the propeptide is strictly required for its maturation and activation. The cleaved propeptide however remains associated with the catalytic domain through non-covalent interactions, preventing potential substrates from accessing its active site. As a result, it is secreted from cells as a propeptide-containing, enzymatically inactive protein. In terms of processing, phosphorylation protects the propeptide against proteolysis.

Its subcellular location is the cytoplasm. It localises to the secreted. It is found in the endosome. The protein resides in the lysosome. The protein localises to the cell surface. Its subcellular location is the endoplasmic reticulum. It localises to the golgi apparatus. Its proteolytic activity is autoinhibited by the non-covalent binding of the propeptide to the catalytic domain. Inhibited by EGTA. In terms of biological role, crucial player in the regulation of plasma cholesterol homeostasis. Binds to low-density lipid receptor family members: low density lipoprotein receptor (LDLR), very low density lipoprotein receptor (VLDLR), apolipoprotein E receptor (LRP1/APOER) and apolipoprotein receptor 2 (LRP8/APOER2), and promotes their degradation in intracellular acidic compartments. Acts via a non-proteolytic mechanism to enhance the degradation of the hepatic LDLR through a clathrin LDLRAP1/ARH-mediated pathway. May prevent the recycling of LDLR from endosomes to the cell surface or direct it to lysosomes for degradation. Can induce ubiquitination of LDLR leading to its subsequent degradation. Inhibits intracellular degradation of APOB via the autophagosome/lysosome pathway in a LDLR-independent manner. Involved in the disposal of non-acetylated intermediates of BACE1 in the early secretory pathway. Inhibits epithelial Na(+) channel (ENaC)-mediated Na(+) absorption by reducing ENaC surface expression primarily by increasing its proteasomal degradation. Regulates neuronal apoptosis via modulation of LRP8/APOER2 levels and related anti-apoptotic signaling pathways. The polypeptide is Proprotein convertase subtilisin/kexin type 9 (PCSK9) (Ateles geoffroyi (Black-handed spider monkey)).